The primary structure comprises 154 residues: Cyanate hydratase (154 aa).

Residues R100, E103, and S126 contribute to the active site.

Belongs to the cyanase family.

The catalysed reaction is cyanate + hydrogencarbonate + 3 H(+) = NH4(+) + 2 CO2. Functionally, catalyzes the reaction of cyanate with bicarbonate to produce ammonia and carbon dioxide. The chain is Cyanate hydratase from Aspergillus fumigatus (strain CBS 144.89 / FGSC A1163 / CEA10) (Neosartorya fumigata).